Here is a 152-residue protein sequence, read N- to C-terminus: Small heat shock protein HspA (152 aa).

Residues 29–139 (TAGEANYPPC…KPRRIPIDNL (111 aa)) form the sHSP domain.

This sequence belongs to the small heat shock protein (HSP20) family.

The polypeptide is Small heat shock protein HspA (hspA) (Bradyrhizobium diazoefficiens (strain JCM 10833 / BCRC 13528 / IAM 13628 / NBRC 14792 / USDA 110)).